Here is a 127-residue protein sequence, read N- to C-terminus: MSRRNTDAITIHSILDWIEDNLESPLSLEKVSERSGYSKWHLQRMFKKETGHSLGQYIRSRKMTEIAQKLKESNEPILYLAERYGFESQQTLTRTFKNYFDVPPHKYRMTNMQGESRFLHPLNHYNS.

Positions 12–110 (HSILDWIEDN…DVPPHKYRMT (99 aa)) constitute an HTH araC/xylS-type domain. DNA-binding regions (H-T-H motif) lie at residues 29–50 (EKVS…KKET) and 77–100 (ILYL…KNYF).

In terms of assembly, monomer.

In terms of biological role, may be a transcriptional activator of genes involved in the multiple antibiotic resistance (Mar) phenotype. It can also activate genes such as sodA, zwf and micF. This is Multiple antibiotic resistance protein MarA (marA) from Escherichia coli (strain K12).